A 394-amino-acid polypeptide reads, in one-letter code: MPPKAKAKDAGPVERPILGRFSSHLKIGIVGLPNVGKSTLFNTLTKLSIPAENFPFCTIEPNEARVNIPDERFDWLCQTYKPKSEIPAFLEIHDIAGLVRGAHEGQGLGNNFLSHIRAVDGIFHVLRAFEDADIIHVDDIVDPVRDLETITEELRLKDIEFVGKKIDDVEKSMKRSNDKQLKIELELLQKVKAWLEDGKDVRFGDWKTADIEILNTFQLLSAKPVVYLINLNERDYQRKKNKFLPKIHAWVQEHGGDTMIPFSGVFERSLADMAPDEAAKYCEENKLQSALPRIIKTGFSAINLIYFFTAGPDEVKCWQIRRQSKAPQAAGAIHTDFERGFICAEVMKFEDLKELGNEPAVKAAGKYRQEGKTYVVQDGDIIFFKFNVSGGGKK.

The 258-residue stretch at L25–C282 folds into the OBG-type G domain. Residues N34–T39, F56–E60, and D94–G97 each bind ATP. Mg(2+) contacts are provided by S38 and T58. Residue F129 participates in GTP binding. Residues N230–L231, L231, and S263–V265 contribute to the ATP site. A GTP-binding site is contributed by S263 to V265. One can recognise a TGS domain in the interval N303–F386.

It belongs to the TRAFAC class OBG-HflX-like GTPase superfamily. OBG GTPase family. YchF/OLA1 subfamily. As to quaternary structure, monomer (Potential). Interacts with CAR4/GAP1. Mg(2+) serves as cofactor.

It is found in the cytoplasm. The protein localises to the cytosol. With respect to regulation, activated by GAP1. Hydrolyzes ATP, and can also hydrolyze GTP with lower efficiency. Has lower affinity for GTP (Potential). Exhibits GTPase activity. Confers sensitivity to salinity stress by suppressing the anti-oxidation enzymatic activities and increasing lipid peroxidation thus leading to the accumulation of reactive oxygen species (ROS). Acts as a negative regulator of disease resistance against bacterial pathogen. In Arabidopsis thaliana (Mouse-ear cress), this protein is Obg-like ATPase 1.